A 187-amino-acid chain; its full sequence is Ribosome-recycling factor (187 aa).

Belongs to the RRF family.

The protein localises to the cytoplasm. Its function is as follows. Responsible for the release of ribosomes from messenger RNA at the termination of protein biosynthesis. May increase the efficiency of translation by recycling ribosomes from one round of translation to another. The chain is Ribosome-recycling factor from Methylobacterium nodulans (strain LMG 21967 / CNCM I-2342 / ORS 2060).